A 157-amino-acid chain; its full sequence is Large ribosomal subunit protein uL15 (157 aa).

Residues 1–64 (MKLNEIPAVP…MPLQRRLPKR (64 aa)) form a disordered region. Residues 21–31 (RGPGSGNGKTA) are compositionally biased toward gly residues.

It belongs to the universal ribosomal protein uL15 family. In terms of assembly, part of the 50S ribosomal subunit.

Functionally, binds to the 23S rRNA. The polypeptide is Large ribosomal subunit protein uL15 (Magnetococcus marinus (strain ATCC BAA-1437 / JCM 17883 / MC-1)).